The primary structure comprises 55 residues: Large ribosomal subunit protein bL33 (55 aa).

The protein belongs to the bacterial ribosomal protein bL33 family.

This chain is Large ribosomal subunit protein bL33, found in Sinorhizobium medicae (strain WSM419) (Ensifer medicae).